A 208-amino-acid polypeptide reads, in one-letter code: Ribosome maturation factor RimP (208 aa).

Positions 165–208 (TAQPKKGQRQGKEPAKESGQKKQLAEAAPRSGSKRSERGSEKRK) are disordered. Basic and acidic residues-rich tracts occupy residues 174 to 188 (QGKEPAKESGQKKQL) and 198 to 208 (KRSERGSEKRK).

This sequence belongs to the RimP family.

It localises to the cytoplasm. Functionally, required for maturation of 30S ribosomal subunits. The polypeptide is Ribosome maturation factor RimP (Sorangium cellulosum (strain So ce56) (Polyangium cellulosum (strain So ce56))).